The primary structure comprises 86 residues: Large ribosomal subunit protein bL28 (86 aa).

This sequence belongs to the bacterial ribosomal protein bL28 family.

In Bacteroides thetaiotaomicron (strain ATCC 29148 / DSM 2079 / JCM 5827 / CCUG 10774 / NCTC 10582 / VPI-5482 / E50), this protein is Large ribosomal subunit protein bL28.